The primary structure comprises 405 residues: Terminal uridylyltransferase cid1 (405 aa).

Residue S90 participates in UTP binding. Mg(2+)-binding residues include D101 and D103. UTP is bound by residues A168, N171, T172, K193, K197, S211, Y212, and H336. A PAP-associated domain is found at 267-336 (SLGSLLHGFF…AIEDPFEISH (70 aa)). Residue R340 participates in ATP binding. Residues 377 to 405 (APIPPRRQKKTDEQSNKKLLNETDGDNSE) form a disordered region. The span at 386 to 397 (KTDEQSNKKLLN) shows a compositional bias: basic and acidic residues.

It belongs to the DNA polymerase type-B-like family. It depends on Mg(2+) as a cofactor. Mn(2+) is required as a cofactor.

Its subcellular location is the cytoplasm. The catalysed reaction is RNA(n) + UTP = RNA(n)-3'-uridine ribonucleotide + diphosphate. It carries out the reaction RNA(n) + ATP = RNA(n)-3'-adenine ribonucleotide + diphosphate. Cytoplasmic uridylyltransferase that mediates the terminal uridylation of mRNAs with short poly(A) tails such as such as act1, hcn1 and urg1 mRNAs, hence facilitating global mRNA decay. Uridylates the 3' ends of actin mRNAs upon S-phase arrest. Also has a weak poly(A) polymerase (PAP) activity. Residue His-336 is responsible for the specificity for UTP. Involved in cell cycle arrest where in association with crb2/rhp9 and chk1 it inhibits unscheduled mitosis. The sequence is that of Terminal uridylyltransferase cid1 from Schizosaccharomyces pombe (strain 972 / ATCC 24843) (Fission yeast).